A 196-amino-acid polypeptide reads, in one-letter code: Chromophore lyase CpcT/CpeT (196 aa).

This sequence belongs to the CpcT/CpeT biliprotein lyase family.

Its function is as follows. Covalently attaches a chromophore to Cys residue(s) of phycobiliproteins. The chain is Chromophore lyase CpcT/CpeT from Thermosynechococcus vestitus (strain NIES-2133 / IAM M-273 / BP-1).